Consider the following 364-residue polypeptide: Alanine racemase (364 aa).

Lysine 35 serves as the catalytic Proton acceptor; specific for D-alanine. An N6-(pyridoxal phosphate)lysine modification is found at lysine 35. A substrate-binding site is contributed by arginine 136. Tyrosine 261 (proton acceptor; specific for L-alanine) is an active-site residue. Substrate is bound at residue methionine 309.

This sequence belongs to the alanine racemase family. Pyridoxal 5'-phosphate is required as a cofactor.

The catalysed reaction is L-alanine = D-alanine. It functions in the pathway amino-acid biosynthesis; D-alanine biosynthesis; D-alanine from L-alanine: step 1/1. In terms of biological role, catalyzes the interconversion of L-alanine and D-alanine. May also act on other amino acids. This is Alanine racemase (alr) from Shewanella amazonensis (strain ATCC BAA-1098 / SB2B).